The primary structure comprises 261 residues: Probable septum site-determining protein MinC (261 aa).

The segment at 106-145 (RAPAAKPADEAEPAAVPAVETAAAPAAAAAPEQPSEPAPT) is disordered. Over residues 118–144 (PAAVPAVETAAAPAAAAAPEQPSEPAP) the composition is skewed to low complexity.

It belongs to the MinC family. As to quaternary structure, interacts with MinD and FtsZ.

In terms of biological role, cell division inhibitor that blocks the formation of polar Z ring septums. Rapidly oscillates between the poles of the cell to destabilize FtsZ filaments that have formed before they mature into polar Z rings. Prevents FtsZ polymerization. The chain is Probable septum site-determining protein MinC from Burkholderia orbicola (strain AU 1054).